The primary structure comprises 103 residues: Pyrimidine/purine nucleoside phosphorylase (103 aa).

It belongs to the nucleoside phosphorylase PpnP family.

It catalyses the reaction a purine D-ribonucleoside + phosphate = a purine nucleobase + alpha-D-ribose 1-phosphate. The enzyme catalyses adenosine + phosphate = alpha-D-ribose 1-phosphate + adenine. It carries out the reaction cytidine + phosphate = cytosine + alpha-D-ribose 1-phosphate. The catalysed reaction is guanosine + phosphate = alpha-D-ribose 1-phosphate + guanine. It catalyses the reaction inosine + phosphate = alpha-D-ribose 1-phosphate + hypoxanthine. The enzyme catalyses thymidine + phosphate = 2-deoxy-alpha-D-ribose 1-phosphate + thymine. It carries out the reaction uridine + phosphate = alpha-D-ribose 1-phosphate + uracil. The catalysed reaction is xanthosine + phosphate = alpha-D-ribose 1-phosphate + xanthine. In terms of biological role, catalyzes the phosphorolysis of diverse nucleosides, yielding D-ribose 1-phosphate and the respective free bases. Can use uridine, adenosine, guanosine, cytidine, thymidine, inosine and xanthosine as substrates. Also catalyzes the reverse reactions. The sequence is that of Pyrimidine/purine nucleoside phosphorylase from Citrifermentans bemidjiense (strain ATCC BAA-1014 / DSM 16622 / JCM 12645 / Bem) (Geobacter bemidjiensis).